The primary structure comprises 702 residues: Exodeoxyribonuclease 1 (702 aa).

Residues 1–96 (MGIQGLLPQL…STESKRRDKR (96 aa)) form an N-domain region. Residues D30, D78, E150, D152, D171, D173, and D227 each coordinate Mg(2+). Residues 114-247 (NAMDYFQKCV…ITAMKLVRRF (134 aa)) are I-domain. The residue at position 372 (S372) is a Phosphoserine. Disordered stretches follow at residues 465 to 571 (SIQD…SQRS) and 660 to 685 (SFNS…SQAR). Residues 474–498 (NSQSLEEPVSESQLSTQIPSSFITT) show a composition bias toward polar residues. Composition is skewed to acidic residues over residues 500-518 (LEDD…SDIE) and 535-550 (NTDD…DYSE). A compositionally biased stretch (low complexity) spans 558-571 (TSSTTSFPGSSQRS). The span at 667-678 (LHEESKKRDIET) shows a compositional bias: basic and acidic residues.

This sequence belongs to the XPG/RAD2 endonuclease family. EXO1 subfamily. Interacts with mismatch repair protein MSH2. Requires Mg(2+) as cofactor.

It is found in the nucleus. Its activity is regulated as follows. Inactivated by calcium and zinc ions. Functionally, 5'-&gt;3' double-stranded DNA exonuclease involved in mismatch repair and eventually also in mitotic recombination between direct repeats. Also has a minor role in the correction of large DNA mismatches that occur in the heteroduplex DNA during meiotic recombination at the HIS4 locus. The sequence is that of Exodeoxyribonuclease 1 (EXO1) from Saccharomyces cerevisiae (strain ATCC 204508 / S288c) (Baker's yeast).